We begin with the raw amino-acid sequence, 399 residues long: Lipid droplet-regulating VLDL assembly factor AUP1 (399 aa).

At 1–21 the chain is on the cytoplasmic side; the sequence is MEQPSLESMLELQRFPRNPFS. An intramembrane segment occupies 22 to 42; it reads LVLLLLYFPFGLCLFLIRLFI. The Cytoplasmic portion of the chain corresponds to 43 to 399; sequence GAHVFLVSCV…GEEEEEGARG (357 aa). The 43-residue stretch at 284-326 folds into the CUE domain; that stretch reads THIQMAQHVKEVLPQVPLSAIHRDLGHTGCVDTTITNFLEGRV. Residues 332 to 364 form a disordered region; that stretch reads EEETTGAAEGTSKSRVSRPLPQGFAKKPEDRHL.

Belongs to the AUP1 family.

Its subcellular location is the endoplasmic reticulum membrane. It localises to the lipid droplet. In terms of biological role, plays a role in the translocation of terminally misfolded proteins from the endoplasmic reticulum lumen to the cytoplasm and their degradation by the proteasome. Plays a role in lipid droplet formation. Induces lipid droplet clustering. The polypeptide is Lipid droplet-regulating VLDL assembly factor AUP1 (Xenopus laevis (African clawed frog)).